The following is a 59-amino-acid chain: Protein HOR7 (59 aa).

Residues 1 to 19 (MKLSQVVVSAVAFTGLVSA) form the signal peptide.

It to yeast DDR2.

The chain is Protein HOR7 (HOR7) from Saccharomyces cerevisiae (strain ATCC 204508 / S288c) (Baker's yeast).